The primary structure comprises 420 residues: Phosphoglycerate kinase, cytosolic (420 aa).

The (2R)-3-phosphoglycerate site is built by valine 23, aspartate 24, phenylalanine 25, asparagine 26, arginine 39, serine 61, histidine 62, glycine 64, arginine 65, arginine 135, histidine 171, and arginine 172. Residue glycine 217 coordinates ADP. CDP is bound at residue glycine 217. Lysine 219 serves as a coordination point for (2R)-3-phosphoglycerate. AMP is bound at residue lysine 219. Residue aspartate 222 coordinates CDP. Position 222 (aspartate 222) interacts with Mg(2+). The ADP site is built by lysine 223 and glycine 241. Lysine 223 provides a ligand contact to AMP. ATP is bound at residue lysine 223. Glycine 241 is a CDP binding site. AMP-binding residues include alanine 242 and alanine 314. Residues alanine 242 and alanine 314 each contribute to the ATP site. ADP contacts are provided by alanine 314 and asparagine 338. The CDP site is built by glycine 339 and phenylalanine 344. The ADP site is built by phenylalanine 344, glutamate 345, aspartate 377, and serine 378. An AMP-binding site is contributed by glutamate 345. ATP contacts are provided by glutamate 345, aspartate 377, and serine 378. A Mg(2+)-binding site is contributed by aspartate 377.

It belongs to the phosphoglycerate kinase family. Monomer. Mg(2+) is required as a cofactor.

The protein resides in the cytoplasm. It catalyses the reaction (2R)-3-phosphoglycerate + ATP = (2R)-3-phospho-glyceroyl phosphate + ADP. The protein operates within carbohydrate degradation; glycolysis; pyruvate from D-glyceraldehyde 3-phosphate: step 2/5. The polypeptide is Phosphoglycerate kinase, cytosolic (C1PGK) (Trypanosoma congolense).